The following is a 451-amino-acid chain: D-ribitol-5-phosphate cytidylyltransferase (451 aa).

The segment at 1–29 is disordered; the sequence is MEAGPPGSARPAEPGPCLSGQRGADHTAS.

It belongs to the IspD/TarI cytidylyltransferase family. IspD subfamily. As to quaternary structure, homodimer. In terms of tissue distribution, ubiquitously expressed, with high expression in brain.

It is found in the cytoplasm. The protein localises to the cytosol. It carries out the reaction D-ribitol 5-phosphate + CTP + H(+) = CDP-L-ribitol + diphosphate. The enzyme catalyses D-ribose 5-phosphate + CTP + H(+) = CDP-D-ribose + diphosphate. The catalysed reaction is D-ribulose 5-phosphate + CTP + H(+) = CDP-D-ribulose + diphosphate. The protein operates within protein modification; protein glycosylation. Cytidylyltransferase required for protein O-linked mannosylation. Catalyzes the formation of CDP-ribitol nucleotide sugar from D-ribitol 5-phosphate. CDP-ribitol is a substrate of FKTN during the biosynthesis of the phosphorylated O-mannosyl trisaccharide (N-acetylgalactosamine-beta-3-N-acetylglucosamine-beta-4-(phosphate-6-)mannose), a carbohydrate structure present in alpha-dystroglycan (DAG1), which is required for binding laminin G-like domain-containing extracellular proteins with high affinity. Shows activity toward other pentose phosphate sugars and mediates formation of CDP-ribulose or CDP-ribose using CTP and ribulose-5-phosphate or ribose-5-phosphate, respectively. Not Involved in dolichol production. The polypeptide is D-ribitol-5-phosphate cytidylyltransferase (Homo sapiens (Human)).